Consider the following 410-residue polypeptide: Peptidase T (410 aa).

His79 lines the Zn(2+) pocket. Residue Asp81 is part of the active site. Asp142 provides a ligand contact to Zn(2+). The active-site Proton acceptor is the Glu176. 3 residues coordinate Zn(2+): Glu177, Asp199, and His381.

Belongs to the peptidase M20B family. Zn(2+) is required as a cofactor.

Its subcellular location is the cytoplasm. The catalysed reaction is Release of the N-terminal residue from a tripeptide.. Functionally, cleaves the N-terminal amino acid of tripeptides. The chain is Peptidase T from Listeria welshimeri serovar 6b (strain ATCC 35897 / DSM 20650 / CCUG 15529 / CIP 8149 / NCTC 11857 / SLCC 5334 / V8).